The chain runs to 505 residues: ATP synthase subunit alpha (505 aa).

Position 171-178 (171-178) interacts with ATP; it reads GDRQTGKT.

It belongs to the ATPase alpha/beta chains family. F-type ATPases have 2 components, CF(1) - the catalytic core - and CF(0) - the membrane proton channel. CF(1) has five subunits: alpha(3), beta(3), gamma(1), delta(1), epsilon(1). CF(0) has three main subunits: a(1), b(2) and c(9-12). The alpha and beta chains form an alternating ring which encloses part of the gamma chain. CF(1) is attached to CF(0) by a central stalk formed by the gamma and epsilon chains, while a peripheral stalk is formed by the delta and b chains.

The protein localises to the cell inner membrane. It carries out the reaction ATP + H2O + 4 H(+)(in) = ADP + phosphate + 5 H(+)(out). In terms of biological role, produces ATP from ADP in the presence of a proton gradient across the membrane. The alpha chain is a regulatory subunit. The chain is ATP synthase subunit alpha from Campylobacter fetus subsp. fetus (strain 82-40).